The chain runs to 613 residues: Pescadillo homolog (613 aa).

The stretch at 259 to 344 (KELSNELETK…MKQIEHDIIX (86 aa)) forms a coiled coil. The segment at 268–333 (KESTEDNIIE…KNDQKNDQKN (66 aa)) is disordered. Residues 278 to 333 (ENEKKTKNGKTENCEKNDQENEKKTKNDKTKNCEKNDQKNDQKNDQKNDQKNDQKN) show a composition bias toward basic and acidic residues. The BRCT domain maps to 350–453 (SVKNLFKNHI…MILSCEDYNI (104 aa)). Residues 485 to 517 (LSEDPQYNKSIQKNKTNSENKXNNYNDNENDMS) are disordered. Positions 492 to 601 (NKSIQKNKTN…ENRQKLTIEK (110 aa)) form a coiled coil. Residues 497 to 511 (KNKTNSENKXNNYND) are compositionally biased toward low complexity.

This sequence belongs to the pescadillo family.

The protein resides in the nucleus. The protein localises to the nucleolus. Its subcellular location is the nucleoplasm. In terms of biological role, required for maturation of ribosomal RNAs and formation of the large ribosomal subunit. This chain is Pescadillo homolog, found in Plasmodium yoelii yoelii.